We begin with the raw amino-acid sequence, 1032 residues long: Protein phosphatase 1 regulatory subunit 12A (1032 aa).

The KVKF motif motif lies at 35–38 (KVKF). ANK repeat units lie at residues 39 to 68 (DDGA…DINY), 72 to 101 (DGLT…NINQ), 105 to 134 (EGWI…HVGA), 138 to 164 (EGDT…RQGV), 198 to 227 (SGGT…DVNI), and 231 to 260 (DGWT…DMET). (3S)-3-hydroxyasparagine; by HIF1AN occurs at positions 67 and 100. (3S)-3-hydroxyasparagine; by HIF1AN is present on N226. Disordered stretches follow at residues 290 to 553 (LHSE…HRSC) and 588 to 928 (SSTS…RLEK). Residues 291–300 (HSEKRDKKSP) are compositionally biased toward basic and acidic residues. Residue S299 is modified to Phosphoserine. Over residues 302–316 (IESTANMENNQPQKT) the composition is skewed to polar residues. Basic and acidic residues predominate over residues 318-340 (KNKETLIIEPEKNASRIESLEQE). The span at 357 to 369 (SEEDEEDDSESEA) shows a compositional bias: acidic residues. A compositionally biased stretch (low complexity) spans 383–399 (AHTASTQAAPAAVTTPT). Over residues 400-421 (LSSNQGTPTSPVKKFPTSTTKI) the composition is skewed to polar residues. Residues S422 and S432 each carry the phosphoserine modification. Over residues 422 to 432 (SPKEEERKDES) the composition is skewed to basic and acidic residues. T443 carries the phosphothreonine modification. At S445 the chain carries Phosphoserine. At Y446 the chain carries Phosphotyrosine. The span at 469–480 (RSASSPRLSSSL) shows a compositional bias: low complexity. S472 is modified (phosphoserine; by NUAK1). A Phosphoserine; by CDK1 modification is found at S473. S477 bears the Phosphoserine mark. Basic and acidic residues predominate over residues 481–491 (DNKEKEKDNKG). S507 and S509 each carry phosphoserine. Positions 540-551 (NSSINEGSTYHR) are enriched in polar residues. Phosphoserine is present on S601. The segment covering 602-612 (PAGTQSSTSNR) has biased composition (polar residues). Over residues 614-625 (WAEDSTEKEKDS) the composition is skewed to basic and acidic residues. S618 bears the Phosphoserine mark. A compositionally biased stretch (low complexity) spans 633–661 (LVAPTVVSAAASSTTALTTTTAGTLSSTS). Over residues 674 to 683 (VRDEESESQR) the composition is skewed to basic and acidic residues. An interaction with ROCK2 region spans residues 683–866 (RKARSRQARQ…VSFWTQDSDE (184 aa)). Positions 684-694 (KARSRQARQSR) are enriched in basic residues. S693 and S696 each carry phosphoserine; by PKA and PKG; in vitro. The residue at position 697 (T697) is a Phosphothreonine; by ROCK1, ROCK2, CDC42BP, ZIPK/DAPK3 and RAF1. A compositionally biased stretch (basic and acidic residues) spans 719–768 (RTREQENEEKDKEEKEKQDKEKQEEKKESEVSREDEYKQKYSRTYDETYA). A compositionally biased stretch (low complexity) spans 774 to 797 (STSSSSTPSSSSLSTLGSSLYASS). Residues 798–812 (QLNRPNSLVGITSAY) are compositionally biased toward polar residues. S804 carries the post-translational modification Phosphoserine. Residues 816–842 (LTKDNEREGEKKEEEKEGEDKSQPKSI) are compositionally biased toward basic and acidic residues. The segment covering 843–854 (RERRRPREKRRS) has biased composition (basic residues). The residue at position 854 (S854) is a Phosphoserine; by ROCK2. 2 positions are modified to phosphoserine: S864 and S873. A compositionally biased stretch (basic and acidic residues) spans 869–885 (QERQSDTEDGSSKRDTQ). The segment covering 886-900 (TDSVSRYDSSSTSSS) has biased composition (low complexity). A phosphoserine mark is found at S905 and S910. S912 bears the Phosphoserine; by NUAK1 mark. Residues 916 to 928 (LEERKPYGSRLEK) are compositionally biased toward basic and acidic residues. Residue S997 is modified to Phosphoserine.

As to quaternary structure, PP1 comprises a catalytic subunit, PPP1CA, PPP1CB or PPP1CC, and one or several targeting or regulatory subunits. PPP1R12A mediates binding to myosin. Interacts with ARHA and CIT. Binds PPP1R12B, ROCK1 and IL16. Interacts directly with PRKG1. Non-covalent dimer of 2 dimers; PRKG1-PRKG1 and PPP1R12A-PPP1R12A. Interacts with SMTNL1. Interacts with PPP1CB; the interaction is direct. Interacts (when phosphorylated at Ser-445, Ser-472 and Ser-910) with 14-3-3. Interacts with ROCK1 and ROCK2. Interacts with isoform 1 and isoform 2 of ZIPK/DAPK3. Interacts with RAF1. Interacts with HIF1AN. Interacts with NCKAP1L. Post-translationally, phosphorylated on upon DNA damage, probably by ATM or ATR. Phosphorylated by CIT (Rho-associated kinase). Phosphorylated cooperatively by ROCK1 and CDC42BP on Thr-697. In vitro, phosphorylation of Ser-696 by PKA and PKG appears to prevent phosphorylation of the inhibitory site Thr-697, probably mediated by PRKG1. May be phosphorylated at Thr-697 by DMPK; may inhibit the myosin phosphatase activity. Phosphorylated at Ser-473 by CDK1 during mitosis, creating docking sites for the POLO box domains of PLK1. Subsequently, PLK1 binds and phosphorylates PPP1R12A. Smooth muscle. Detected in aorta, portal vein, stomach, intestine, bladder and lung.

The protein localises to the cytoplasm. The protein resides in the cytoskeleton. It localises to the stress fiber. Its function is as follows. Key regulator of protein phosphatase 1C (PPP1C). Mediates binding to myosin. As part of the PPP1C complex, involved in dephosphorylation of PLK1. Capable of inhibiting HIF1AN-dependent suppression of HIF1A activity. The sequence is that of Protein phosphatase 1 regulatory subunit 12A from Rattus norvegicus (Rat).